A 472-amino-acid chain; its full sequence is Glutamate--tRNA ligase 1 (472 aa).

Positions 9–19 match the 'HIGH' region motif; it reads PSPTGLLHVGN. Positions 112–131 are enriched in basic and acidic residues; sequence AMAEKRPPRYDGTWRDRDPS. The disordered stretch occupies residues 112–133; it reads AMAEKRPPRYDGTWRDRDPSEA. Residues 238–242 carry the 'KMSKS' region motif; the sequence is KLSKR. Lys-241 provides a ligand contact to ATP.

It belongs to the class-I aminoacyl-tRNA synthetase family. Glutamate--tRNA ligase type 1 subfamily. In terms of assembly, monomer.

It is found in the cytoplasm. The catalysed reaction is tRNA(Glu) + L-glutamate + ATP = L-glutamyl-tRNA(Glu) + AMP + diphosphate. Functionally, catalyzes the attachment of glutamate to tRNA(Glu) in a two-step reaction: glutamate is first activated by ATP to form Glu-AMP and then transferred to the acceptor end of tRNA(Glu). The sequence is that of Glutamate--tRNA ligase 1 from Gluconobacter oxydans (strain 621H) (Gluconobacter suboxydans).